The sequence spans 330 residues: uncharacterized protein (330 aa).

This sequence to H.influenzae HI_0461.

This is an uncharacterized protein from Escherichia coli (strain K12).